The chain runs to 285 residues: Aquaporin PIP2-5 (285 aa).

2 consecutive transmembrane segments (helical) span residues 38-58 and 75-95; these read AVIAEFVATLLFLYITVATVI and CGGVGVLGIAWAFGGMIFILV. The short motif at 107–109 is the NPA 1 element; that stretch reads NPA. Transmembrane regions (helical) follow at residues 126 to 146, 168 to 188, and 202 to 222; these read LLYIVAQCLGAICGVGLVKGF, GTGLAAEIIGTFVLVYTVFSA, and VLAPLPIGFAVFMVHLATIPI. The short motif at 228-230 is the NPA 2 element; the sequence is NPA. Residues 250–270 traverse the membrane as a helical segment; it reads IFWVGPFIGAAIAAAYHQYVL.

This sequence belongs to the MIP/aquaporin (TC 1.A.8) family. PIP (TC 1.A.8.11) subfamily. Homomers. May interact with PIP1-2 to form heteromers. In terms of tissue distribution, specifically expressed in roots, in the exodermis, endodermis and xylem parenchyma. Polar localization to the external periclinal side of epidermal cells in root apices.

Its subcellular location is the cell membrane. Water channel required to facilitate the transport of water across cell membrane. Its function is impaired by Hg(2+). May play a role in water uptake from the root surface. Active as homomers. Increased activity when heteromerization with PIP1-2. The chain is Aquaporin PIP2-5 (PIP2-5) from Zea mays (Maize).